We begin with the raw amino-acid sequence, 459 residues long: ATP synthase subunit beta (459 aa).

149–156 (GGAGVGKT) provides a ligand contact to ATP.

Belongs to the ATPase alpha/beta chains family. F-type ATPases have 2 components, CF(1) - the catalytic core - and CF(0) - the membrane proton channel. CF(1) has five subunits: alpha(3), beta(3), gamma(1), delta(1), epsilon(1). CF(0) has three main subunits: a(1), b(2) and c(9-12). The alpha and beta chains form an alternating ring which encloses part of the gamma chain. CF(1) is attached to CF(0) by a central stalk formed by the gamma and epsilon chains, while a peripheral stalk is formed by the delta and b chains.

Its subcellular location is the cell inner membrane. It catalyses the reaction ATP + H2O + 4 H(+)(in) = ADP + phosphate + 5 H(+)(out). Produces ATP from ADP in the presence of a proton gradient across the membrane. The catalytic sites are hosted primarily by the beta subunits. In Pseudomonas savastanoi pv. phaseolicola (strain 1448A / Race 6) (Pseudomonas syringae pv. phaseolicola (strain 1448A / Race 6)), this protein is ATP synthase subunit beta.